A 390-amino-acid polypeptide reads, in one-letter code: Queuine tRNA-ribosyltransferase (390 aa).

Asp-92 functions as the Proton acceptor in the catalytic mechanism. Substrate is bound by residues 92–96 (DSGGF), Asp-146, Gln-195, and Gly-222. The RNA binding stretch occupies residues 253–259 (GVGTPED). Residue Asp-272 is the Nucleophile of the active site. Residues 277-281 (TRNAR) are RNA binding; important for wobble base 34 recognition. Residues Cys-310, Cys-312, Cys-315, and His-354 each coordinate Zn(2+).

Belongs to the queuine tRNA-ribosyltransferase family. As to quaternary structure, homodimer. Within each dimer, one monomer is responsible for RNA recognition and catalysis, while the other monomer binds to the replacement base PreQ1. Zn(2+) serves as cofactor.

It catalyses the reaction 7-aminomethyl-7-carbaguanine + guanosine(34) in tRNA = 7-aminomethyl-7-carbaguanosine(34) in tRNA + guanine. It functions in the pathway tRNA modification; tRNA-queuosine biosynthesis. In terms of biological role, catalyzes the base-exchange of a guanine (G) residue with the queuine precursor 7-aminomethyl-7-deazaguanine (PreQ1) at position 34 (anticodon wobble position) in tRNAs with GU(N) anticodons (tRNA-Asp, -Asn, -His and -Tyr). Catalysis occurs through a double-displacement mechanism. The nucleophile active site attacks the C1' of nucleotide 34 to detach the guanine base from the RNA, forming a covalent enzyme-RNA intermediate. The proton acceptor active site deprotonates the incoming PreQ1, allowing a nucleophilic attack on the C1' of the ribose to form the product. After dissociation, two additional enzymatic reactions on the tRNA convert PreQ1 to queuine (Q), resulting in the hypermodified nucleoside queuosine (7-(((4,5-cis-dihydroxy-2-cyclopenten-1-yl)amino)methyl)-7-deazaguanosine). This is Queuine tRNA-ribosyltransferase from Acidovorax sp. (strain JS42).